The primary structure comprises 735 residues: Catalase-peroxidase (735 aa).

Residues 1 to 31 form a disordered region; sequence MENNTNPISGQGKCPFSGGAAKQSAGAGTRN. A compositionally biased stretch (low complexity) spans 17–28; it reads SGGAAKQSAGAG. A cross-link (tryptophyl-tyrosyl-methioninium (Trp-Tyr) (with M-252)) is located at residues 103–226; the sequence is WHSAGTYRVA…LAAVQMGLIY (124 aa). Histidine 104 (proton acceptor) is an active-site residue. The tryptophyl-tyrosyl-methioninium (Tyr-Met) (with W-103) cross-link spans 226–252; that stretch reads YVNPEGPNGNPDPLASARDIRETFARM. Histidine 267 contacts heme b. The segment at 352–371 is disordered; sequence KPKNGAGAGTVPDAHNSSKS.

Belongs to the peroxidase family. Peroxidase/catalase subfamily. As to quaternary structure, homodimer or homotetramer. Requires heme b as cofactor. Post-translationally, formation of the three residue Trp-Tyr-Met cross-link is important for the catalase, but not the peroxidase activity of the enzyme.

It catalyses the reaction H2O2 + AH2 = A + 2 H2O. The enzyme catalyses 2 H2O2 = O2 + 2 H2O. Its function is as follows. Bifunctional enzyme with both catalase and broad-spectrum peroxidase activity. The protein is Catalase-peroxidase of Flavobacterium psychrophilum (strain ATCC 49511 / DSM 21280 / CIP 103535 / JIP02/86).